The following is a 217-amino-acid chain: Somatotropin (217 aa).

The signal sequence occupies residues Met-1–Ala-26. A Zn(2+)-binding site is contributed by His-46. A disulfide bridge links Cys-79 with Cys-190. Glu-199 provides a ligand contact to Zn(2+). An intrachain disulfide couples Cys-207 to Cys-215.

The protein belongs to the somatotropin/prolactin family.

It is found in the secreted. Functionally, growth hormone plays an important role in growth control. The protein is Somatotropin (GH) of Struthio camelus (Common ostrich).